A 406-amino-acid chain; its full sequence is Serine/threonine transporter SstT (406 aa).

9 consecutive transmembrane segments (helical) span residues 11-31 (IGLV…GWLM), 45-65 (FVGA…MAAI), 79-99 (VLIM…VASF), 141-161 (AIAN…GLAL), 185-205 (FVIA…IAET), 216-236 (LLTI…PIIV), 298-318 (MAGA…TLGV), 330-350 (VVAT…LLLI), and 357-377 (FNIP…IGVV).

It belongs to the dicarboxylate/amino acid:cation symporter (DAACS) (TC 2.A.23) family.

It localises to the cell inner membrane. It carries out the reaction L-serine(in) + Na(+)(in) = L-serine(out) + Na(+)(out). It catalyses the reaction L-threonine(in) + Na(+)(in) = L-threonine(out) + Na(+)(out). In terms of biological role, involved in the import of serine and threonine into the cell, with the concomitant import of sodium (symport system). The chain is Serine/threonine transporter SstT from Psychrobacter sp. (strain PRwf-1).